The sequence spans 333 residues: Ketoreductase sphI (333 aa).

An NADP(+)-binding site is contributed by tyrosine 167.

It belongs to the NAD(P)-dependent epimerase/dehydratase family. Dihydroflavonol-4-reductase subfamily.

Ketoreductase; part of the gene cluster that mediates the biosynthesis of sphingofungins, bioactive molecules acting as sphingolipid inhibitors via inhibiting serine palmitoyl transferase (SPT). Does not seem to be involved in any biosynthetic process leading to the production of sphingofungins, but might be connected to a regulation or resistance mechanism. This chain is Ketoreductase sphI, found in Aspergillus fumigatus (strain CBS 144.89 / FGSC A1163 / CEA10) (Neosartorya fumigata).